The primary structure comprises 242 residues: 3-dehydroquinate dehydratase (242 aa).

3-dehydroquinate-binding positions include 39-41 (EIR) and Arg73. The Proton donor/acceptor role is filled by His135. The active-site Schiff-base intermediate with substrate is the Lys162. 3-dehydroquinate-binding residues include Arg203 and Gln228.

This sequence belongs to the type-I 3-dehydroquinase family. As to quaternary structure, homodimer.

It carries out the reaction 3-dehydroquinate = 3-dehydroshikimate + H2O. It participates in metabolic intermediate biosynthesis; chorismate biosynthesis; chorismate from D-erythrose 4-phosphate and phosphoenolpyruvate: step 3/7. Its function is as follows. Involved in the third step of the chorismate pathway, which leads to the biosynthesis of aromatic amino acids. Catalyzes the cis-dehydration of 3-dehydroquinate (DHQ) and introduces the first double bond of the aromatic ring to yield 3-dehydroshikimate. In Methanosarcina barkeri (strain Fusaro / DSM 804), this protein is 3-dehydroquinate dehydratase.